The chain runs to 1285 residues: Replicase polyprotein 1TF (1285 aa).

The segment at 8-28 (CMCTPAARVFWNAGQVFCTRC) adopts a C4-type; atypical zinc-finger fold. A Peptidase C31 domain is found at 69-180 (ECTPSGCCWL…QPFCPFEEAH (112 aa)). Residues 69–182 (ECTPSGCCWL…FCPFEEAHSS (114 aa)) form a PCP1-alpha region. Active-site for Nsp1-alpha papain-like cysteine proteinase activity residues include C76 and H146. Positions 269–384 (PDVFDGKCWL…IFRFGAHKWY (116 aa)) are PCP1-beta. Residues 269-385 (PDVFDGKCWL…FRFGAHKWYG (117 aa)) form the Peptidase C32 domain. Catalysis depends on for Nsp1-beta papain-like cysteine proteinase activity residues C276 and H345. Disordered regions lie at residues 752-797 (PSDP…DAGA) and 1050-1088 (KPVG…SRVS). Residues 775–790 (APASTTTLVREQTPDN) are compositionally biased toward polar residues. The next 4 membrane-spanning stretches (helical) occupy residues 1136 to 1156 (LWLQ…CSVV), 1170 to 1190 (FLVL…LLLY), 1211 to 1231 (VMLS…AALW), and 1250 to 1270 (VISG…FLLF).

It is found in the host nucleus. The protein localises to the host cytoplasm. Its subcellular location is the host membrane. Functionally, inhibits host IFN-beta production. Plays a role in the degradation of the host transcriptional activator CREBBP protein. The degradation of host CREBBP which is a key component of the IFN enhanceosome is likely responsible for the inhibition of interferon mediated by Nsp1-alpha. Also participates in the inhibition of host NF-kappa-B activation. Its function is as follows. Plays a role in the inhibition of the interferon-activated JAK/STAT signal transduction by mediating the ubiquitination and subsequent proteasomal degradation of host KPNA1. Plays a role in viral replication. This Porcine reproductive and respiratory syndrome virus (strain Lelystad) (PRRSV) protein is Replicase polyprotein 1TF.